The following is a 706-amino-acid chain: Glycogen [starch] synthase (706 aa).

UDP is bound at residue R26. UDP-alpha-D-glucose-binding residues include H191 and R197. 5 residues coordinate alpha-D-glucose 6-phosphate: H277, E278, Q280, H283, and K287. Residue R317 coordinates UDP. Position 317 (R317) interacts with UDP-alpha-D-glucose. An alpha-D-glucose 6-phosphate-binding site is contributed by H491. The UDP-alpha-D-glucose site is built by E500, W502, and G503. Residue T505 participates in UDP binding. Alpha-D-glucose 6-phosphate contacts are provided by R572 and R576. The segment at 670–706 (PEEEDPEEYPFPLTLKQRTGPGSPLDSIQGLQLNGTR) is disordered.

It belongs to the glycosyltransferase 3 family. As to quaternary structure, interacts with glucogenin gnn; the interaction is direct.

The enzyme catalyses [(1-&gt;4)-alpha-D-glucosyl](n) + UDP-alpha-D-glucose = [(1-&gt;4)-alpha-D-glucosyl](n+1) + UDP + H(+). It participates in glycan biosynthesis; glycogen biosynthesis. Its activity is regulated as follows. Allosteric activation by glucose-6-phosphate, and phosphorylation by a cAMP-dependent kinase. In terms of biological role, glycogen synthase participates in the glycogen biosynthetic process along with glycogenin and glycogen branching enzyme. Extends the primer composed of a few glucose units formed by glycogenin by adding new glucose units to it. In this context, glycogen synthase transfers the glycosyl residue from UDP-Glc to the non-reducing end of alpha-1,4-glucan. The chain is Glycogen [starch] synthase (gsy-1) from Neurospora crassa (strain ATCC 24698 / 74-OR23-1A / CBS 708.71 / DSM 1257 / FGSC 987).